The primary structure comprises 143 residues: Large ribosomal subunit protein uL16 (143 aa).

The segment covering 1-17 (MLQPKRTKFRKAHKGRI) has biased composition (basic residues). Residues 1-21 (MLQPKRTKFRKAHKGRIHGNA) are disordered.

It belongs to the universal ribosomal protein uL16 family. Part of the 50S ribosomal subunit.

Functionally, binds 23S rRNA and is also seen to make contacts with the A and possibly P site tRNAs. The protein is Large ribosomal subunit protein uL16 of Rhizorhabdus wittichii (strain DSM 6014 / CCUG 31198 / JCM 15750 / NBRC 105917 / EY 4224 / RW1) (Sphingomonas wittichii).